A 192-amino-acid chain; its full sequence is AYSWDNRVKYVVRYMYDIDDDGFLDKNDFECLAVRNTLIEGRGEFSAADYANNQKIMRNLWNEIAELADFNKDGEVTVDEFKMAVQKHCQGKKYSEFPGAFKVFIANQFKAIDVNGDGKVGLDEYRLDCITRSAFAEVKEIDDAYDKLTTEDDRKAGGLTLERYQDLYAQFISNPNESCSACFLFGPLKVVQ.

Position 1 is an N-acetylalanine (A1). EF-hand domains follow at residues 4–39 (WDNRVKYVVRYMYDIDDDGFLDKNDFECLAVRNTLI), 56–91 (IMRNLWNEIAELADFNKDGEVTVDEFKMAVQKHCQG), 100–135 (AFKVFIANQFKAIDVNGDGKVGLDEYRLDCITRSAF), and 136–171 (AEVKEIDDAYDKLTTEDDRKAGGLTLERYQDLYAQF). 14 residues coordinate Ca(2+): D17, D19, D21, D28, D69, N71, D73, E75, E80, D113, N115, D117, K119, and E124.

SCPs from crayfish, lobster, and shrimp are polymorphic dimers; three isotypes (alpha-alpha, alpha-beta, and beta-beta) have been identified.

Functionally, like parvalbumins, SCPs seem to be more abundant in fast contracting muscles, but no functional relationship can be established from this distribution. The sequence is that of Sarcoplasmic calcium-binding protein, alpha-B and -A chains from Penaeus sp. (Penoeid shrimp).